The chain runs to 154 residues: Melatonin receptor type 1A (154 aa).

The Cytoplasmic portion of the chain corresponds to 1–19 (YCYICHSLKYDRWYSNRNS). Residues 20–40 (LCCVFLICVLTLVAIVPNLCM) form a helical membrane-spanning segment. At 41-62 (GTLQYDPRIYSCTFAQSVSSAY) the chain is on the extracellular side. Residues 63-83 (TIAVVVFHFLVPMVIVIFRYL) traverse the membrane as a helical segment. The Cytoplasmic segment spans residues 84–115 (RIWVLVLQIRWRAKPENNPRLKPQDFRNFVTM). A helical membrane pass occupies residues 116-136 (FVVFVLFAICWAPLNFIGLAV). Residues 137-149 (ASDPASMAPRIPE) are Extracellular-facing.

The protein belongs to the G-protein coupled receptor 1 family.

The protein localises to the cell membrane. In terms of biological role, high affinity receptor for melatonin. Likely to mediate the reproductive and circadian actions of melatonin. The activity of this receptor is mediated by pertussis toxin sensitive G proteins that inhibit adenylate cyclase activity. The protein is Melatonin receptor type 1A (MTNR1A) of Sus scrofa (Pig).